We begin with the raw amino-acid sequence, 118 residues long: Putative pterin-4-alpha-carbinolamine dehydratase (118 aa).

It belongs to the pterin-4-alpha-carbinolamine dehydratase family.

The enzyme catalyses (4aS,6R)-4a-hydroxy-L-erythro-5,6,7,8-tetrahydrobiopterin = (6R)-L-erythro-6,7-dihydrobiopterin + H2O. The protein is Putative pterin-4-alpha-carbinolamine dehydratase of Pseudomonas paraeruginosa (strain DSM 24068 / PA7) (Pseudomonas aeruginosa (strain PA7)).